A 602-amino-acid chain; its full sequence is GTP-binding protein 2 (602 aa).

Residues 18 to 64 form a disordered region; sequence GPAMGGNLKARGAGGSSSCGGPKGKKKNGRNRGGKANNPPYLPPEAE. Residues 29-39 are compositionally biased toward gly residues; that stretch reads GAGGSSSCGGP. Basic residues predominate over residues 40–50; the sequence is KGKKKNGRNRG. A tr-type G domain is found at 170–398; the sequence is FLDLRVAVLG…LNILPPLTNS (229 aa). GTP contacts are provided by residues 179–186, 260–264, and 316–319; these read GNVDSGKS, DLAGH, and SKVD.

It belongs to the TRAFAC class translation factor GTPase superfamily. Classic translation factor GTPase family. GTPBP1 subfamily. As to expression, predominantly expressed in thymus, spleen, and testis. Expressed at lower levels in brain, heart, lung, kidney, and skeletal muscle. In testis, specifically expressed in spermatocytes and round spermatids.

The sequence is that of GTP-binding protein 2 from Mus musculus (Mouse).